A 125-amino-acid chain; its full sequence is Class III hydrophobin G (125 aa).

Positions 1–20 (MKPSIVTFLMLAAVTAAVSA) are cleaved as a signal peptide. Intrachain disulfides connect Cys-54–Cys-107, Cys-60–Cys-101, Cys-61–Cys-94, and Cys-108–Cys-122.

Belongs to the fungal hydrophobin family. As to quaternary structure, self-assembles to form functional amyloid fibrils called rodlets. Self-assembly into fibrillar rodlets occurs spontaneously at hydrophobic:hydrophilic interfaces and the rodlets further associate laterally to form amphipathic monolayers.

It is found in the secreted. The protein localises to the cell wall. In terms of biological role, aerial growth, conidiation, and dispersal of filamentous fungi in the environment rely upon a capability of their secreting small amphipathic proteins called hydrophobins (HPBs) with low sequence identity. Class I can self-assemble into an outermost layer of rodlet bundles on aerial cell surfaces, conferring cellular hydrophobicity that supports fungal growth, development and dispersal; whereas Class II form highly ordered films at water-air interfaces through intermolecular interactions but contribute nothing to the rodlet structure. RodF and rodG belong to Class III, which contains hydrophobins with intermediate (between classes I and II) or atypical characteristics. RodG, unlike rodA, is not required for rodlet formation. The chain is Class III hydrophobin G from Aspergillus fumigatus (strain ATCC MYA-4609 / CBS 101355 / FGSC A1100 / Af293) (Neosartorya fumigata).